The chain runs to 162 residues: Cyclic pyranopterin monophosphate synthase (162 aa).

Residues 75-77 and 115-116 contribute to the substrate site; these read MCH and ME. Residue Asp-130 is part of the active site.

It belongs to the MoaC family. In terms of assembly, homohexamer; trimer of dimers.

The enzyme catalyses (8S)-3',8-cyclo-7,8-dihydroguanosine 5'-triphosphate = cyclic pyranopterin phosphate + diphosphate. It functions in the pathway cofactor biosynthesis; molybdopterin biosynthesis. Catalyzes the conversion of (8S)-3',8-cyclo-7,8-dihydroguanosine 5'-triphosphate to cyclic pyranopterin monophosphate (cPMP). The protein is Cyclic pyranopterin monophosphate synthase of Geobacillus kaustophilus (strain HTA426).